The chain runs to 263 residues: Endonuclease 8 (263 aa).

The active-site Schiff-base intermediate with DNA is proline 2. Glutamate 3 (proton donor) is an active-site residue. The Proton donor; for beta-elimination activity role is filled by lysine 53. DNA-binding residues include glutamine 70, arginine 125, and asparagine 169. The FPG-type zinc finger occupies 229-263; it reads KLFHRDGEACERCGGIIEKTTLSSRPFYWCPHCQK. The active-site Proton donor; for delta-elimination activity is the arginine 253.

It belongs to the FPG family. The cofactor is Zn(2+).

The catalysed reaction is 2'-deoxyribonucleotide-(2'-deoxyribose 5'-phosphate)-2'-deoxyribonucleotide-DNA = a 3'-end 2'-deoxyribonucleotide-(2,3-dehydro-2,3-deoxyribose 5'-phosphate)-DNA + a 5'-end 5'-phospho-2'-deoxyribonucleoside-DNA + H(+). In terms of biological role, involved in base excision repair of DNA damaged by oxidation or by mutagenic agents. Acts as a DNA glycosylase that recognizes and removes damaged bases. Has a preference for oxidized pyrimidines, such as thymine glycol, 5,6-dihydrouracil and 5,6-dihydrothymine. Has AP (apurinic/apyrimidinic) lyase activity and introduces nicks in the DNA strand. Cleaves the DNA backbone by beta-delta elimination to generate a single-strand break at the site of the removed base with both 3'- and 5'-phosphates. In Salmonella typhimurium (strain SL1344), this protein is Endonuclease 8.